The chain runs to 643 residues: Threonine--tRNA ligase (643 aa).

The 61-residue stretch at 1–61 folds into the TGS domain; sequence MPIITLPDGS…EQDATLEIIT (61 aa). Positions 243–534 are catalytic; the sequence is DHRKIGKALD…ITEEYAGFFP (292 aa). Residues C334, H385, and H511 each contribute to the Zn(2+) site.

It belongs to the class-II aminoacyl-tRNA synthetase family. Homodimer. It depends on Zn(2+) as a cofactor.

It localises to the cytoplasm. It catalyses the reaction tRNA(Thr) + L-threonine + ATP = L-threonyl-tRNA(Thr) + AMP + diphosphate + H(+). Catalyzes the attachment of threonine to tRNA(Thr) in a two-step reaction: L-threonine is first activated by ATP to form Thr-AMP and then transferred to the acceptor end of tRNA(Thr). Also edits incorrectly charged L-seryl-tRNA(Thr). The polypeptide is Threonine--tRNA ligase (Haemophilus influenzae (strain PittGG)).